Consider the following 344-residue polypeptide: Phenylalanine--tRNA ligase alpha subunit (344 aa).

Position 255 (Glu-255) interacts with Mg(2+).

Belongs to the class-II aminoacyl-tRNA synthetase family. Phe-tRNA synthetase alpha subunit type 1 subfamily. Tetramer of two alpha and two beta subunits. The cofactor is Mg(2+).

It is found in the cytoplasm. It catalyses the reaction tRNA(Phe) + L-phenylalanine + ATP = L-phenylalanyl-tRNA(Phe) + AMP + diphosphate + H(+). The polypeptide is Phenylalanine--tRNA ligase alpha subunit (Cytophaga hutchinsonii (strain ATCC 33406 / DSM 1761 / CIP 103989 / NBRC 15051 / NCIMB 9469 / D465)).